Reading from the N-terminus, the 138-residue chain is 1,4-dihydroxy-2-naphthoyl-CoA hydrolase (138 aa).

D13 is an active-site residue.

This sequence belongs to the 4-hydroxybenzoyl-CoA thioesterase family. DHNA-CoA hydrolase subfamily.

The catalysed reaction is 1,4-dihydroxy-2-naphthoyl-CoA + H2O = 1,4-dihydroxy-2-naphthoate + CoA + H(+). It participates in cofactor biosynthesis; phylloquinone biosynthesis. It functions in the pathway quinol/quinone metabolism; 1,4-dihydroxy-2-naphthoate biosynthesis; 1,4-dihydroxy-2-naphthoate from chorismate: step 7/7. In terms of biological role, catalyzes the hydrolysis of 1,4-dihydroxy-2-naphthoyl-CoA (DHNA-CoA) to 1,4-dihydroxy-2-naphthoate (DHNA), a reaction involved in phylloquinone (vitamin K1) biosynthesis. The protein is 1,4-dihydroxy-2-naphthoyl-CoA hydrolase of Microcystis aeruginosa (strain NIES-843 / IAM M-2473).